A 338-amino-acid polypeptide reads, in one-letter code: Nicotinate-nucleotide--dimethylbenzimidazole phosphoribosyltransferase (338 aa).

Glutamate 305 serves as the catalytic Proton acceptor.

The protein belongs to the CobT family.

The enzyme catalyses 5,6-dimethylbenzimidazole + nicotinate beta-D-ribonucleotide = alpha-ribazole 5'-phosphate + nicotinate + H(+). It functions in the pathway nucleoside biosynthesis; alpha-ribazole biosynthesis; alpha-ribazole from 5,6-dimethylbenzimidazole: step 1/2. In terms of biological role, catalyzes the synthesis of alpha-ribazole-5'-phosphate from nicotinate mononucleotide (NAMN) and 5,6-dimethylbenzimidazole (DMB). This chain is Nicotinate-nucleotide--dimethylbenzimidazole phosphoribosyltransferase, found in Rhizobium rhizogenes (strain K84 / ATCC BAA-868) (Agrobacterium radiobacter).